The sequence spans 267 residues: Mediator of RNA polymerase II transcription subunit 8 (267 aa).

Coiled-coil stretches lie at residues 1–26 and 116–160; these read MQRE…KNSL and DVEE…EERE. Positions 190 to 267 are disordered; the sequence is GLSNRRPPGQ…KSASMHPYQR (78 aa). Positions 227–245 are enriched in polar residues; it reads PPNQQQQHMAGVSMSQGSQ.

This sequence belongs to the Mediator complex subunit 8 family. Component of the Mediator complex. May be part of a multisubunit E3 ubiquitin-protein ligase complex.

The protein resides in the nucleus. It participates in protein modification; protein ubiquitination. Its function is as follows. Component of the Mediator complex, a coactivator involved in the regulated transcription of nearly all RNA polymerase II-dependent genes. Mediator functions as a bridge to convey information from gene-specific regulatory proteins to the basal RNA polymerase II transcription machinery. Mediator is recruited to promoters by direct interactions with regulatory proteins and serves as a scaffold for the assembly of a functional preinitiation complex with RNA polymerase II and the general transcription factors. May play a role as a target recruitment subunit in E3 ubiquitin-protein ligase complexes and thus in ubiquitination and subsequent proteasomal degradation of target proteins. This is Mediator of RNA polymerase II transcription subunit 8 (med8) from Xenopus tropicalis (Western clawed frog).